A 103-amino-acid polypeptide reads, in one-letter code: Small ribosomal subunit protein uS10 (103 aa).

It belongs to the universal ribosomal protein uS10 family. As to quaternary structure, part of the 30S ribosomal subunit.

Involved in the binding of tRNA to the ribosomes. This chain is Small ribosomal subunit protein uS10, found in Neorickettsia sennetsu (strain ATCC VR-367 / Miyayama) (Ehrlichia sennetsu).